The following is a 965-amino-acid chain: MENTPSHINKTEPSLDKTYSPQEIEQPLYEHWEKQGYFKPNGDTSKESYCIMIPPPNVTGSLHMGHAFQQTIMDTLIRYQRMQGKNTLWQAGTDHAGIATQMVVERKIAAEEGKTRHDYGRDAFIDKIWEWKGESGGTITRQMRRLGNSVDWERERFTMDEGLSNAVKEVFVRLHKEDLIYRGKRLVNWDPKLRTAISDLEVENRESKGSMWHLRYPLADGAKTAEGKDYLVVATTRPETVLGDTGVAVNPEDPRYKDLIGKEVILPLVGRRIPILGDEHADMEKGTGCVKITPAHDFNDYEVGKRHALPMINILTFDGDIRSEAEVFDTHGEATDAFSNAIPAQFQGLERFAARKAVVAEFEKLGLLEEVKPHDLTVPYGDRGGVVIEPMLTDQWYVHTAPLAKVAIEAVENGEIQFVPKQYENMYYSWMRDIQDWCISRQLWWGHRIPAWYDEQGNVYVGRDEAEVRRDNNLGAEVALRQDEDVLDTWFSSGLWTFSTLGWPEQTDALKTFHPTSVVVSGFDIIFFWIARMIMLTMHFMKDENGKPQVPFKTVYMTGLIRDDEGQKMSKSKGNVIDPLDMVDGISLEALLEKRTGNMMQPQLAEKIRKRTEKQFPNGIEPHGTDALRFTLAALASTGRDINWDMKRLEGYRNFCNKLWNASRFVLMNTEGQDCGQNGGEMVLSLADRWILAEFNQTIKAYREAMDTYRFDLAAGILYEFTWNQFCDWYLELTKPVMNSGSEAELRGTRHTLIQVLEALLRLAHPIIPYITETIWQRVKNLKGITADTIMLQPFPEYDASQVDEQALSDLEWIKQTIIAVRNIRAEMNIAPGKPLEVMLRGANAQAQRRVLENQSFIQSLARLSSLTLLAEGDKGPVSVTKLVEGAEVLIPMAGLIDKATELDRLAKEVAKLDAEIERIEGKLGNEGFVARAPEAVVAKERERLAACAEAKQKLIEQQATIAAL.

Residues Met-1–Gln-22 are disordered. Positions Pro-56–His-66 match the 'HIGH' region motif. Positions Lys-568–Ser-572 match the 'KMSKS' region motif. Residue Lys-571 coordinates ATP. Positions Leu-896–Leu-965 form a coiled coil.

The protein belongs to the class-I aminoacyl-tRNA synthetase family. ValS type 1 subfamily. In terms of assembly, monomer.

Its subcellular location is the cytoplasm. It carries out the reaction tRNA(Val) + L-valine + ATP = L-valyl-tRNA(Val) + AMP + diphosphate. Catalyzes the attachment of valine to tRNA(Val). As ValRS can inadvertently accommodate and process structurally similar amino acids such as threonine, to avoid such errors, it has a 'posttransfer' editing activity that hydrolyzes mischarged Thr-tRNA(Val) in a tRNA-dependent manner. The chain is Valine--tRNA ligase from Yersinia pestis.